Here is a 150-residue protein sequence, read N- to C-terminus: CCAAT/enhancer-binding protein gamma (150 aa).

Lys-3 is covalently cross-linked (Glycyl lysine isopeptide (Lys-Gly) (interchain with G-Cter in SUMO2)). Residues 27–94 are disordered; sequence GLQQVPQLVP…QKAQDTLQRV (68 aa). The segment covering 28–37 has biased composition (low complexity); the sequence is LQQVPQLVPA. Positions 56–72 are enriched in basic and acidic residues; sequence SPMDRNSDEYRQRRERN. One can recognise a bZIP domain in the interval 62-125; the sequence is SDEYRQRRER…SVLKDLFLEH (64 aa). A basic motif region spans residues 66 to 93; the sequence is RQRRERNNMAVKKSRLKSKQKAQDTLQR. Residues 97 to 118 form a leucine-zipper region; sequence LKEENERLEAKIKLLTKELSVL.

Belongs to the bZIP family. C/EBP subfamily. As to quaternary structure, binds DNA as a dimer and can form stable heterodimers with CEBPA and CEBPB. Interacts with ZNF638; this interaction increases transcriptional activation.

The protein localises to the nucleus. In terms of biological role, transcription factor that binds to the promoter and the enhancer regions of target genes. Binds to the promoter and the enhancer of the alpha-1-fetoprotein gene. Binds to the enhancer element PRE-I (positive regulatory element-I) of the IL-4 gene. Binds to the promoter and the enhancer of the immunoglobulin heavy chain. Binds to GPE1, a cis-acting element in the G-CSF gene promoter. The protein is CCAAT/enhancer-binding protein gamma (Cebpg) of Rattus norvegicus (Rat).